Consider the following 572-residue polypeptide: Proline--tRNA ligase (572 aa).

This sequence belongs to the class-II aminoacyl-tRNA synthetase family. ProS type 1 subfamily. As to quaternary structure, homodimer.

It localises to the cytoplasm. It catalyses the reaction tRNA(Pro) + L-proline + ATP = L-prolyl-tRNA(Pro) + AMP + diphosphate. Functionally, catalyzes the attachment of proline to tRNA(Pro) in a two-step reaction: proline is first activated by ATP to form Pro-AMP and then transferred to the acceptor end of tRNA(Pro). As ProRS can inadvertently accommodate and process non-cognate amino acids such as alanine and cysteine, to avoid such errors it has two additional distinct editing activities against alanine. One activity is designated as 'pretransfer' editing and involves the tRNA(Pro)-independent hydrolysis of activated Ala-AMP. The other activity is designated 'posttransfer' editing and involves deacylation of mischarged Ala-tRNA(Pro). The misacylated Cys-tRNA(Pro) is not edited by ProRS. This chain is Proline--tRNA ligase, found in Escherichia coli (strain K12 / MC4100 / BW2952).